A 136-amino-acid polypeptide reads, in one-letter code: S-protein homolog 25 (136 aa).

The N-terminal stretch at 1–20 (MNHSVFVILITITYFGLNQA) is a signal peptide. N-linked (GlcNAc...) asparagine glycans are attached at residues N71 and N84.

The protein belongs to the plant self-incompatibility (S1) protein family.

It localises to the secreted. This Arabidopsis thaliana (Mouse-ear cress) protein is S-protein homolog 25.